Reading from the N-terminus, the 163-residue chain is Protein-export protein SecB (163 aa).

This sequence belongs to the SecB family. As to quaternary structure, homotetramer, a dimer of dimers. One homotetramer interacts with 1 SecA dimer.

Its subcellular location is the cytoplasm. Its function is as follows. One of the proteins required for the normal export of preproteins out of the cell cytoplasm. It is a molecular chaperone that binds to a subset of precursor proteins, maintaining them in a translocation-competent state. It also specifically binds to its receptor SecA. This is Protein-export protein SecB from Burkholderia ambifaria (strain MC40-6).